We begin with the raw amino-acid sequence, 360 residues long: Phosphate acyltransferase (360 aa).

Belongs to the PlsX family. Homodimer. Probably interacts with PlsY.

The protein resides in the cytoplasm. The catalysed reaction is a fatty acyl-[ACP] + phosphate = an acyl phosphate + holo-[ACP]. It functions in the pathway lipid metabolism; phospholipid metabolism. Functionally, catalyzes the reversible formation of acyl-phosphate (acyl-PO(4)) from acyl-[acyl-carrier-protein] (acyl-ACP). This enzyme utilizes acyl-ACP as fatty acyl donor, but not acyl-CoA. In Thermobifida fusca (strain YX), this protein is Phosphate acyltransferase.